The primary structure comprises 321 residues: Probable 3-hydroxyisobutyrate dehydrogenase, mitochondrial (321 aa).

NAD(+) contacts are provided by residues 23–52 (KTVGFIGLGNMGGHQAINLIKKGHNLIVFD), 86–87 (LP), and T117. Residue K192 is part of the active site. Position 267 (K267) interacts with NAD(+).

This sequence belongs to the HIBADH-related family. 3-hydroxyisobutyrate dehydrogenase subfamily.

The protein resides in the mitochondrion. The catalysed reaction is 3-hydroxy-2-methylpropanoate + NAD(+) = 2-methyl-3-oxopropanoate + NADH + H(+). The protein operates within amino-acid degradation; L-valine degradation. This Dictyostelium discoideum (Social amoeba) protein is Probable 3-hydroxyisobutyrate dehydrogenase, mitochondrial (hibA).